The primary structure comprises 742 residues: uncharacterized protein (742 aa).

The segment at 1 to 102 (MMLLKRSNDN…FTQTKPNNTD (102 aa)) is disordered. Over residues 18-28 (NRQNRQNNRQN) the composition is skewed to low complexity. Positions 48–57 (RDSSRMDPVD) are enriched in basic and acidic residues. Composition is skewed to polar residues over residues 60 to 69 (TLISFTSGKP) and 77 to 99 (HDTG…TKPN).

This is an uncharacterized protein from Acanthamoeba polyphaga mimivirus (APMV).